Here is a 201-residue protein sequence, read N- to C-terminus: Recombination protein RecR (201 aa).

The C4-type zinc finger occupies Cys-60 to Cys-75. The Toprim domain maps to Ser-83–Pro-178.

The protein belongs to the RecR family.

May play a role in DNA repair. It seems to be involved in an RecBC-independent recombinational process of DNA repair. It may act with RecF and RecO. This chain is Recombination protein RecR, found in Rhizobium etli (strain ATCC 51251 / DSM 11541 / JCM 21823 / NBRC 15573 / CFN 42).